We begin with the raw amino-acid sequence, 335 residues long: Holliday junction branch migration complex subunit RuvB (335 aa).

The segment at Met1 to Tyr183 is large ATPase domain (RuvB-L). ATP-binding positions include Leu22, Arg23, Gly64, Lys67, Thr68, Thr69, Glu130 to Tyr132, Arg173, Tyr183, and Arg220. Mg(2+) is bound at residue Thr68. Residues Thr184–Gln254 are small ATPAse domain (RuvB-S). Positions Pro257–Val335 are head domain (RuvB-H). DNA is bound by residues Arg293, Arg312, and Arg317.

Belongs to the RuvB family. As to quaternary structure, homohexamer. Forms an RuvA(8)-RuvB(12)-Holliday junction (HJ) complex. HJ DNA is sandwiched between 2 RuvA tetramers; dsDNA enters through RuvA and exits via RuvB. An RuvB hexamer assembles on each DNA strand where it exits the tetramer. Each RuvB hexamer is contacted by two RuvA subunits (via domain III) on 2 adjacent RuvB subunits; this complex drives branch migration. In the full resolvosome a probable DNA-RuvA(4)-RuvB(12)-RuvC(2) complex forms which resolves the HJ.

The protein localises to the cytoplasm. It catalyses the reaction ATP + H2O = ADP + phosphate + H(+). Functionally, the RuvA-RuvB-RuvC complex processes Holliday junction (HJ) DNA during genetic recombination and DNA repair, while the RuvA-RuvB complex plays an important role in the rescue of blocked DNA replication forks via replication fork reversal (RFR). RuvA specifically binds to HJ cruciform DNA, conferring on it an open structure. The RuvB hexamer acts as an ATP-dependent pump, pulling dsDNA into and through the RuvAB complex. RuvB forms 2 homohexamers on either side of HJ DNA bound by 1 or 2 RuvA tetramers; 4 subunits per hexamer contact DNA at a time. Coordinated motions by a converter formed by DNA-disengaged RuvB subunits stimulates ATP hydrolysis and nucleotide exchange. Immobilization of the converter enables RuvB to convert the ATP-contained energy into a lever motion, pulling 2 nucleotides of DNA out of the RuvA tetramer per ATP hydrolyzed, thus driving DNA branch migration. The RuvB motors rotate together with the DNA substrate, which together with the progressing nucleotide cycle form the mechanistic basis for DNA recombination by continuous HJ branch migration. Branch migration allows RuvC to scan DNA until it finds its consensus sequence, where it cleaves and resolves cruciform DNA. In Listeria monocytogenes serotype 4a (strain HCC23), this protein is Holliday junction branch migration complex subunit RuvB.